Reading from the N-terminus, the 205-residue chain is Guanylate kinase (205 aa).

One can recognise a Guanylate kinase-like domain in the interval 19–197 (PKLFTISAPA…AYRVLKSIFI (179 aa)). 26–33 (APAGVGKT) serves as a coordination point for ATP.

This sequence belongs to the guanylate kinase family.

It localises to the cytoplasm. It catalyses the reaction GMP + ATP = GDP + ADP. Essential for recycling GMP and indirectly, cGMP. This Chlamydia pneumoniae (Chlamydophila pneumoniae) protein is Guanylate kinase (gmk).